The chain runs to 285 residues: Protease HtpX homolog (285 aa).

2 consecutive transmembrane segments (helical) span residues 7–27 and 30–50; these read TAML…MIGG and GMTI…WFSD. A Zn(2+)-binding site is contributed by H131. E132 is an active-site residue. Residue H135 coordinates Zn(2+). 2 consecutive transmembrane segments (helical) span residues 146–166 and 177–197; these read ITAT…FFGG and IAGI…QMAI. E202 contacts Zn(2+).

It belongs to the peptidase M48B family. Zn(2+) serves as cofactor.

It is found in the cell inner membrane. This Burkholderia cenocepacia (strain ATCC BAA-245 / DSM 16553 / LMG 16656 / NCTC 13227 / J2315 / CF5610) (Burkholderia cepacia (strain J2315)) protein is Protease HtpX homolog.